The primary structure comprises 200 residues: Recombination protein RecR (200 aa).

The C4-type zinc-finger motif lies at 58–75 (CPLCFTLKESKEADCHFC). The 96-residue stretch at 82-177 (QSLCIVASPK…NISRLALGLP (96 aa)) folds into the Toprim domain.

It belongs to the RecR family.

Its function is as follows. May play a role in DNA repair. It seems to be involved in an RecBC-independent recombinational process of DNA repair. It may act with RecF and RecO. The polypeptide is Recombination protein RecR (Chlamydia pneumoniae (Chlamydophila pneumoniae)).